The following is a 747-amino-acid chain: Meprin A subunit alpha (747 aa).

Residues 1 to 20 (MLWIQPACLLSLIFSAHIAA) form the signal peptide. A propeptide spanning residues 21–64 (VSIKHLLNGSDHDTDVGEQKDIFEINLAAGLNLFQGDILLPRTR) is cleaved from the precursor. 2 N-linked (GlcNAc...) asparagine glycosylation sites follow: asparagine 28 and asparagine 139. One can recognise a Peptidase M12A domain in the interval 65 to 259 (NAMRDPSSRW…IRLNRMYNCT (195 aa)). Residues 65-713 (NAMRDPSSRW…FYAGERCQAM (649 aa)) lie on the Extracellular side of the membrane. Disulfide bonds link cysteine 106/cysteine 258, cysteine 127/cysteine 146, and cysteine 268/cysteine 430. Residue histidine 154 participates in Zn(2+) binding. Glutamate 155 is an active-site residue. Histidine 158 and histidine 164 together coordinate Zn(2+). 7 N-linked (GlcNAc...) asparagine glycosylation sites follow: asparagine 221, asparagine 257, asparagine 317, asparagine 413, asparagine 439, asparagine 533, and asparagine 540. Positions 263-432 (TLLDHCDFEK…ITLTETPCPA (170 aa)) constitute an MAM domain. In terms of domain architecture, MATH spans 433–594 (GVWTIRNISQ…GDSLIIFVDF (162 aa)). Positions 638-663 (ESLPSSLGQRHPSRQKRSVENTGPME) are disordered. Residues 671 to 711 (FRDPCDPNPCQNEGTCVNVKGMASCRCVSGHAFFYAGERCQ) form the EGF-like domain. Cystine bridges form between cysteine 675–cysteine 686, cysteine 680–cysteine 695, and cysteine 697–cysteine 710. Residues 714 to 741 (HVHGSLLGLLIGCIAGLIFLTFVTFSTT) form a helical membrane-spanning segment. At 742–747 (NGKLRQ) the chain is on the cytoplasmic side.

In terms of assembly, homotetramer consisting of disulfide-linked alpha subunits, homooligomer consisting of disulfide-linked alpha subunit homodimers, or heterotetramer of two alpha and two beta subunits formed by non-covalent association of two disulfide-linked heterodimers. Genetic factors determine which oligomer(s) will be formed (strain-specific). Interacts with MBL2 through its carbohydrate moiety. This interaction may inhibit its catalytic activity. Zn(2+) serves as cofactor. Post-translationally, N-glycosylated; contains GlcNAc, galactose, mannose and a small amount of fucose. In terms of tissue distribution, kidney, intestinal brush borders and salivary ducts.

Its subcellular location is the membrane. It catalyses the reaction Hydrolysis of protein and peptide substrates preferentially on carboxyl side of hydrophobic residues.. Its activity is regulated as follows. Inhibited by metal ion chelators EDTA and 1,10-phenanthroline, bradykinin analogs, cysteine, CONA65, and several hydroxamate compounds, particularly tyrosine hydroxamate. Not inhibited by 3,4-dichloroisocourmarin, soybean trypsin inhibitor, or the cysteine proteinase inhibitors iodoacetic acid and E-64. This chain is Meprin A subunit alpha (Mep1a), found in Mus musculus (Mouse).